The primary structure comprises 265 residues: Mlc titration factor A (265 aa).

The Zn(2+) site is built by His111, His148, His152, and Glu211.

The protein belongs to the MtfA family. Interacts with Mlc. Zn(2+) serves as cofactor.

The protein localises to the cytoplasm. Functionally, involved in the modulation of the activity of the glucose-phosphotransferase system (glucose-PTS). Interacts with the transcriptional repressor Mlc, preventing its interaction with DNA and leading to the modulation of expression of genes regulated by Mlc, including ptsG, which encodes the PTS system glucose-specific EIICB component. In terms of biological role, shows zinc-dependent metallopeptidase activity. The chain is Mlc titration factor A from Escherichia coli O17:K52:H18 (strain UMN026 / ExPEC).